A 259-amino-acid chain; its full sequence is Src-like-adapter 2 (259 aa).

The segment covering 1 to 20 (MGSLSSRGKTSSPSPSSSGP) has biased composition (low complexity). Positions 1–30 (MGSLSSRGKTSSPSPSSSGPDQEPVSMQPE) are disordered. Gly2 is lipidated: N-myristoyl glycine. The region spanning 31–91 (RHKVTAVALG…PSVYVAKVAH (61 aa)) is the SH3 domain. The region spanning 93 to 190 (WLYEGLSREK…GICCPLREPC (98 aa)) is the SH2 domain. Positions 190 to 259 (CVLQKLGPLP…SLAEDPLDDA (70 aa)) are SLA C-terminal.

As to quaternary structure, interacts (via its C-terminal domain) with CBL (phosphorylated). Interacts (via SH2 domain) with ZAP70 (phosphorylated) and CD3Z (phosphorylated). Interacts (via SH2 domain) with CSF1R (phosphorylated). Phosphorylated by CSF1R. In terms of tissue distribution, mainly expressed in immune system. Highly expressed in spleen and thymus and expressed at intermediate levels in lung. Not expressed in liver, heart and brain. Isoform 1 is predominant in lung and spleen, while isoform 2 is predominant in thymus.

It is found in the cytoplasm. Its subcellular location is the cell membrane. The protein localises to the cytoplasmic vesicle. It localises to the late endosome. Its function is as follows. Adapter protein, which negatively regulates T-cell receptor (TCR) signaling. Inhibits T-cell antigen-receptor induced activation of nuclear factor of activated T-cells. May act by linking signaling proteins such as ZAP70 with CBL, leading to a CBL dependent degradation of signaling proteins. In Mus musculus (Mouse), this protein is Src-like-adapter 2 (Sla2).